We begin with the raw amino-acid sequence, 130 residues long: Small ribosomal subunit protein uS8 (130 aa).

It belongs to the universal ribosomal protein uS8 family. In terms of assembly, part of the 30S ribosomal subunit. Contacts proteins S5 and S12.

In terms of biological role, one of the primary rRNA binding proteins, it binds directly to 16S rRNA central domain where it helps coordinate assembly of the platform of the 30S subunit. This Marinobacter nauticus (strain ATCC 700491 / DSM 11845 / VT8) (Marinobacter aquaeolei) protein is Small ribosomal subunit protein uS8.